We begin with the raw amino-acid sequence, 211 residues long: Pyridoxine/pyridoxamine 5'-phosphate oxidase (211 aa).

Substrate-binding positions include 7 to 10 (RREY) and Lys65. FMN is bound by residues 60–65 (RIVLLK), 75–76 (YT), Arg81, Lys82, and Gln104. Residues Tyr122, Arg126, and Ser130 each contribute to the substrate site. FMN-binding positions include 139–140 (QS) and Trp184. 190 to 192 (RLH) is a binding site for substrate. Arg194 serves as a coordination point for FMN.

It belongs to the pyridoxamine 5'-phosphate oxidase family. Homodimer. The cofactor is FMN.

It catalyses the reaction pyridoxamine 5'-phosphate + O2 + H2O = pyridoxal 5'-phosphate + H2O2 + NH4(+). The enzyme catalyses pyridoxine 5'-phosphate + O2 = pyridoxal 5'-phosphate + H2O2. It functions in the pathway cofactor metabolism; pyridoxal 5'-phosphate salvage; pyridoxal 5'-phosphate from pyridoxamine 5'-phosphate: step 1/1. The protein operates within cofactor metabolism; pyridoxal 5'-phosphate salvage; pyridoxal 5'-phosphate from pyridoxine 5'-phosphate: step 1/1. Catalyzes the oxidation of either pyridoxine 5'-phosphate (PNP) or pyridoxamine 5'-phosphate (PMP) into pyridoxal 5'-phosphate (PLP). The protein is Pyridoxine/pyridoxamine 5'-phosphate oxidase of Vibrio cholerae serotype O1 (strain ATCC 39315 / El Tor Inaba N16961).